The following is a 206-amino-acid chain: Large ribosomal subunit protein mL40 (206 aa).

The N-terminal 46 residues, 1–46, are a transit peptide targeting the mitochondrion; the sequence is MATAAMLCAARALRPRSWIPGTCQAQVRHTHQRASLLSFWELIPMR. A disordered region spans residues 170 to 190; it reads PFEKEGPHYTPPVPNYQAPEG.

This sequence belongs to the mitochondrion-specific ribosomal protein mL40 family. In terms of assembly, component of the mitochondrial ribosome large subunit (39S) which comprises a 16S rRNA and about 50 distinct proteins.

It localises to the mitochondrion. The protein is Large ribosomal subunit protein mL40 (Mrpl40) of Rattus norvegicus (Rat).